The primary structure comprises 277 residues: tRNA pseudouridine synthase B (277 aa).

D38 (nucleophile) is an active-site residue.

The protein belongs to the pseudouridine synthase TruB family. Type 1 subfamily.

It carries out the reaction uridine(55) in tRNA = pseudouridine(55) in tRNA. Responsible for synthesis of pseudouridine from uracil-55 in the psi GC loop of transfer RNAs. In Sulfurovum sp. (strain NBC37-1), this protein is tRNA pseudouridine synthase B.